The sequence spans 73 residues: MPQTQELDQRIAELEMKIAFQENTLEELNQALIDQQFVLDKMQLQLRYMASKLKDLQSSNIATQAEETPPPHY.

The protein belongs to the SlyX family.

In Histophilus somni (strain 129Pt) (Haemophilus somnus), this protein is Protein SlyX homolog.